A 279-amino-acid polypeptide reads, in one-letter code: MVLEAVLLGIVQGITEFLPISSTAHMYILAKLLNLHVPGRFFLSSVQLGTSFALILYFFKDVKGIISETSRSIYSFIQFGIRQKQEKRNEYTRLGLLLVTGTIPVVLLGFLLVRFVPDGFFSAARNLFTMGVALIVFGLLLGFADALFRRKKGNIFQITFIESVLIGAAQIFAIIPGVSRSGITITTARFLNFDRQLAVRFSFLLSLPVTFIGGMYGLVAGPDTDYYSLGYSLIGAIVSFVVGLLVVSALLRIISKTTFVLFVYYRVLFGLFLVIVSFF.

8 consecutive transmembrane segments (helical) span residues 1-21 (MVLE…LPIS), 39-59 (GRFF…LYFF), 96-116 (LLLV…VRFV), 128-148 (FTMG…DALF), 155-175 (IFQI…FAII), 201-221 (FSFL…LVAG), 231-251 (YSLI…SALL), and 259-279 (FVLF…VSFF).

Belongs to the UppP family.

Its subcellular location is the cell membrane. It carries out the reaction di-trans,octa-cis-undecaprenyl diphosphate + H2O = di-trans,octa-cis-undecaprenyl phosphate + phosphate + H(+). Catalyzes the dephosphorylation of undecaprenyl diphosphate (UPP). Confers resistance to bacitracin. The polypeptide is Undecaprenyl-diphosphatase (Tropheryma whipplei (strain TW08/27) (Whipple's bacillus)).